Here is a 115-residue protein sequence, read N- to C-terminus: NADH-ubiquinone oxidoreductase chain 3 (115 aa).

Helical transmembrane passes span 3–23, 55–75, and 86–106; these read LMATLLTNTMLTSLMVLIAFW, FFLVAITFLLFDLEIALLLPL, and LTLLMSFMLIILLAIGLAYEW.

This sequence belongs to the complex I subunit 3 family. As to quaternary structure, core subunit of respiratory chain NADH dehydrogenase (Complex I) which is composed of 45 different subunits. Interacts with TMEM186. Interacts with TMEM242.

It localises to the mitochondrion inner membrane. The enzyme catalyses a ubiquinone + NADH + 5 H(+)(in) = a ubiquinol + NAD(+) + 4 H(+)(out). In terms of biological role, core subunit of the mitochondrial membrane respiratory chain NADH dehydrogenase (Complex I) which catalyzes electron transfer from NADH through the respiratory chain, using ubiquinone as an electron acceptor. Essential for the catalytic activity of complex I. This Mammuthus primigenius (Siberian woolly mammoth) protein is NADH-ubiquinone oxidoreductase chain 3.